A 143-amino-acid polypeptide reads, in one-letter code: EKC/KEOPS complex subunit LAGE3 (143 aa).

The segment at 1–57 (MRDADADAGGGADGGDGRGGHSCRGGVDTAAAPAGGAPPAHAPGPGRDAASAARGSR) is disordered. The span at 30–55 (AAAPAGGAPPAHAPGPGRDAASAARG) shows a compositional bias: low complexity.

It belongs to the CTAG/PCC1 family. As to quaternary structure, component of the EKC/KEOPS complex composed of at least GON7, TP53RK, TPRKB, OSGEP and LAGE3; the whole complex dimerizes. Ubiquitous.

The protein localises to the cytoplasm. It is found in the nucleus. Its function is as follows. Component of the EKC/KEOPS complex that is required for the formation of a threonylcarbamoyl group on adenosine at position 37 (t(6)A37) in tRNAs that read codons beginning with adenine. The complex is probably involved in the transfer of the threonylcarbamoyl moiety of threonylcarbamoyl-AMP (TC-AMP) to the N6 group of A37. LAGE3 functions as a dimerization module for the complex. The protein is EKC/KEOPS complex subunit LAGE3 of Homo sapiens (Human).